The chain runs to 291 residues: Diaminopimelate epimerase (291 aa).

Positions 17, 50, and 70 each coordinate substrate. Cysteine 79 (proton donor) is an active-site residue. Substrate contacts are provided by residues 80-81 (GN), asparagine 167, asparagine 200, and 218-219 (ER). The Proton acceptor role is filled by cysteine 227. Residue 228–229 (GS) participates in substrate binding.

Belongs to the diaminopimelate epimerase family. As to quaternary structure, homodimer.

It localises to the cytoplasm. It carries out the reaction (2S,6S)-2,6-diaminopimelate = meso-2,6-diaminopimelate. It participates in amino-acid biosynthesis; L-lysine biosynthesis via DAP pathway; DL-2,6-diaminopimelate from LL-2,6-diaminopimelate: step 1/1. In terms of biological role, catalyzes the stereoinversion of LL-2,6-diaminopimelate (L,L-DAP) to meso-diaminopimelate (meso-DAP), a precursor of L-lysine and an essential component of the bacterial peptidoglycan. The chain is Diaminopimelate epimerase from Bradyrhizobium diazoefficiens (strain JCM 10833 / BCRC 13528 / IAM 13628 / NBRC 14792 / USDA 110).